The chain runs to 116 residues: Thioredoxin (116 aa).

Positions 2–113 (TDSEKSATIK…LLRELSDVVP (112 aa)) constitute a Thioredoxin domain. Cys37 and Cys40 are joined by a disulfide.

This sequence belongs to the thioredoxin family.

Its function is as follows. Participates in various redox reactions through the reversible oxidation of its active center dithiol to a disulfide and catalyzes dithiol-disulfide exchange reactions. This Mycobacterium bovis (strain ATCC BAA-935 / AF2122/97) protein is Thioredoxin (trxA).